Consider the following 174-residue polypeptide: MAAANKGNKSRVRSIRFATSHDAESSQSHVHFDEKLHDSVVMVTQESDSSFLVKVGFLKILHRYEITFTLPPVHRLSKDVRETPVPSLHLKLLSVMPIPEGYSVKCEYSAHKEGVLKEEMLLACEGGSDTCVRVIVQARVMDRHHGTPMLLDGVRCVGAELEYDSEHSDWRGFD.

An N-acetylalanine modification is found at A2. At T147 the chain carries Phosphothreonine.

It belongs to the ADISSP family.

It is found in the secreted. Functionally, adipocyte-secreted protein (adipokine) that acts as a key regulator for white adipose tissue (WAT) thermogenesis and glucose homeostasis at least in part through activation of protein kinase A (PKA). In Bos taurus (Bovine), this protein is Adipose-secreted signaling protein.